Reading from the N-terminus, the 573-residue chain is Proline--tRNA ligase (573 aa).

It belongs to the class-II aminoacyl-tRNA synthetase family. ProS type 1 subfamily. Homodimer.

The protein resides in the cytoplasm. It catalyses the reaction tRNA(Pro) + L-proline + ATP = L-prolyl-tRNA(Pro) + AMP + diphosphate. Functionally, catalyzes the attachment of proline to tRNA(Pro) in a two-step reaction: proline is first activated by ATP to form Pro-AMP and then transferred to the acceptor end of tRNA(Pro). As ProRS can inadvertently accommodate and process non-cognate amino acids such as alanine and cysteine, to avoid such errors it has two additional distinct editing activities against alanine. One activity is designated as 'pretransfer' editing and involves the tRNA(Pro)-independent hydrolysis of activated Ala-AMP. The other activity is designated 'posttransfer' editing and involves deacylation of mischarged Ala-tRNA(Pro). The misacylated Cys-tRNA(Pro) is not edited by ProRS. The polypeptide is Proline--tRNA ligase (Citrifermentans bemidjiense (strain ATCC BAA-1014 / DSM 16622 / JCM 12645 / Bem) (Geobacter bemidjiensis)).